We begin with the raw amino-acid sequence, 360 residues long: Putative FBD-associated F-box protein At5g56430 (360 aa).

One can recognise an F-box domain in the interval 1–53 (MRNISDLPNDLLVKILSLIPIKVAASTSLLSKRWGSVWKLIPTLDYDGTYSAA). 2 Kelch repeats span residues 140-186 (IRYT…EQLD) and 235-285 (VMCS…SVPE). The FBD domain maps to 276 to 326 (KWEQPNSVPECLLVSLETVKWILYKGTQEEKDVVKYLLKNGNFIKTMSIRF).

This is Putative FBD-associated F-box protein At5g56430 from Arabidopsis thaliana (Mouse-ear cress).